The primary structure comprises 109 residues: Iron-sulfur cluster assembly protein CyaY (109 aa).

This sequence belongs to the frataxin family.

In terms of biological role, involved in iron-sulfur (Fe-S) cluster assembly. May act as a regulator of Fe-S biogenesis. This is Iron-sulfur cluster assembly protein CyaY from Shewanella baltica (strain OS155 / ATCC BAA-1091).